The chain runs to 680 residues: TBC1 domain family member 23 (680 aa).

One can recognise a Rab-GAP TBC domain in the interval 40-221; it reads DLSPPQRAKL…ALWDVYLQQA (182 aa). Residues 330 to 442 enclose the Rhodanese domain; that stretch reads EGVRFFVVDC…LQQHLADINV (113 aa).

Its subcellular location is the golgi apparatus. It is found in the trans-Golgi network. The protein resides in the cytoplasmic vesicle. Its function is as follows. Putative Rab GTPase-activating protein which plays a role in vesicular trafficking. Involved in endosome-to-Golgi trafficking. Acts as a bridging protein by binding simultaneously to golgins, located at the trans-Golgi, and to the WASH complex, located on endosome-derived vesicles. Plays a role in brain development. May act as a general inhibitor of innate immunity signaling. In Danio rerio (Zebrafish), this protein is TBC1 domain family member 23 (tbc1d23).